Here is a 238-residue protein sequence, read N- to C-terminus: Peptidyl-tRNA hydrolase (238 aa).

Tyrosine 14 provides a ligand contact to tRNA. Histidine 19 (proton acceptor) is an active-site residue. TRNA-binding residues include tyrosine 64, asparagine 66, and asparagine 112. Residues 202–225 (PAAQSHIHQARNSAQPKKLPETGP) are disordered. Over residues 207 to 216 (HIHQARNSAQ) the composition is skewed to polar residues.

This sequence belongs to the PTH family. In terms of assembly, monomer.

The protein localises to the cytoplasm. It carries out the reaction an N-acyl-L-alpha-aminoacyl-tRNA + H2O = an N-acyl-L-amino acid + a tRNA + H(+). Hydrolyzes ribosome-free peptidyl-tRNAs (with 1 or more amino acids incorporated), which drop off the ribosome during protein synthesis, or as a result of ribosome stalling. In terms of biological role, catalyzes the release of premature peptidyl moieties from peptidyl-tRNA molecules trapped in stalled 50S ribosomal subunits, and thus maintains levels of free tRNAs and 50S ribosomes. This is Peptidyl-tRNA hydrolase from Agrobacterium fabrum (strain C58 / ATCC 33970) (Agrobacterium tumefaciens (strain C58)).